Consider the following 270-residue polypeptide: MDTINQRIGEMLARVRATRPLIHHITNLVVMNDTANVTLHVGGLPVMAHDVEEVAEMVTHAGALVLNVGTLSPDWVESMLVAGRQANELDIPIVLDPVGAGATQLRTMTNLKLLRSLHIGVVRGNGGEIGALSGAGGEMRGVESIAAPENPLTAARTLAQTYRTVVALTGARDIITDGERGFIVSNGHIWLTTLTGTGCMATTMVAAFAAVERDYLLAAAGGLAMFGLAAELAAEKAHGPASFKTALFDQIYNLTPEQVAAGARIAELEW.

Substrate is bound at residue M47. R123 and T169 together coordinate ATP. G196 provides a ligand contact to substrate.

The protein belongs to the Thz kinase family. It depends on Mg(2+) as a cofactor.

The enzyme catalyses 5-(2-hydroxyethyl)-4-methylthiazole + ATP = 4-methyl-5-(2-phosphooxyethyl)-thiazole + ADP + H(+). Its pathway is cofactor biosynthesis; thiamine diphosphate biosynthesis; 4-methyl-5-(2-phosphoethyl)-thiazole from 5-(2-hydroxyethyl)-4-methylthiazole: step 1/1. Functionally, catalyzes the phosphorylation of the hydroxyl group of 4-methyl-5-beta-hydroxyethylthiazole (THZ). This Roseiflexus castenholzii (strain DSM 13941 / HLO8) protein is Hydroxyethylthiazole kinase.